A 128-amino-acid polypeptide reads, in one-letter code: Protein FAM229A (128 aa).

A disordered region spans residues 1 to 96 (MQSSPSTLGP…VATDQNPVRP (96 aa)).

Belongs to the FAM229 family.

The polypeptide is Protein FAM229A (Fam229a) (Mus musculus (Mouse)).